Here is a 551-residue protein sequence, read N- to C-terminus: MVSKITLLCFAITCDVLISMGTVQGVFNHSVGPLAVCSPDMEDARAYTENCYRRCSRNKEPSTHGYVWLYSDTAPKGGPVVTRCNKVRVKQVFTETWSFSFIKGTPTRMTLDVTEAECVAVMRSQCPTHNCNIKAPSELPEEYHYASDTEVVQDYLEILSMPSGLDYMEENLRITPSQSKFSFQLTDGKGQEGQYIYFWDTKYDDTKCPFDSFQSHGCDKYDSPLDLINCRESRFVIPSIANSTTLVGACQGLQKSTTGLIYKWDDRPDSIANDSKRIALTKNDQTAGNVATLRVLVADSLNAVDEDLCHTQCEMLDFILRSDRKREVLTRIGGSYLVVSKTSYIRQCRPLVGCRIVKPHYFCGNPNRVAIICHGKVWYWDPLKSYVDEGMNCERRVAGTKLVFAVGNHEYAIDDDMHVELPEHETYGISHDLLASSEDRISKDIVDPTELRNSWQSHIAKEGRMSIEPLSQDKQVSHWDAEFSNPLTWLTSAGGWILDMSHKVTLWATVFLTLGALVAGAKVWEIMRKANRKSQYKRTNTEPHDSQATWI.

The N-terminal stretch at 1 to 25 is a signal peptide; that stretch reads MVSKITLLCFAITCDVLISMGTVQG. Residues 26 to 503 are Virion surface-facing; sequence VFNHSVGPLA…GGWILDMSHK (478 aa). The chain crosses the membrane as a helical span at residues 504-524; the sequence is VTLWATVFLTLGALVAGAKVW. Residues 525 to 551 lie on the Intravirion side of the membrane; the sequence is EIMRKANRKSQYKRTNTEPHDSQATWI.

Belongs to the cytorhabdovirus glycoprotein family. As to quaternary structure, homotrimer. Interacts with matrix protein. Glycosylated by host. Glycosylation is crucial for glycoprotein export at the cell surface.

Its subcellular location is the virion membrane. In terms of biological role, attaches the virus to host cellular receptor, inducing endocytosis of the virion. In the endosome, the acidic pH induces conformational changes in the glycoprotein trimer, which trigger fusion between virus and cell membrane. The protein is Glycoprotein (G) of Embergeria (Garden lettuce).